Here is a 219-residue protein sequence, read N- to C-terminus: Glutathione S-transferase-like protein LUC7 (219 aa).

Residues 3 to 84 (PFGRLYSFMP…YLAQSGPYSE (82 aa)) form the GST N-terminal domain. A GST C-terminal domain is found at 90–219 (DAATSAKIRQ…NLIDVKRVHE (130 aa)).

Belongs to the GST superfamily.

In terms of biological role, glutathione S-transferase-like protein; part of the gene cluster that mediates the biosynthesis of the mycotoxin lucilactaene and the lucilactaene-related compound NG-391 that act as cell cycle inhibitors with potent growth inhibitory activity against malarial parasites, moderate growth inhibitory activity against cancer cells, and no activity against bacteria and fungi. Within the cluster, LUC7 and LUC8 encode proteins which are not commonly involved in the biosynthesis of secondary metabolites and are not essential for lucilactaene biosynthesis. The chain is Glutathione S-transferase-like protein LUC7 from Fusarium sp.